Consider the following 254-residue polypeptide: PHD finger protein ALFIN-LIKE 8 (254 aa).

The segment at 137 to 194 is disordered; the sequence is GTAKKQSKEKTPKTSGKSNKSGTKPSRQPEPNSRGPKMPPPKDEDDSGGEEEEEEEDH. Low complexity predominate over residues 149–162; the sequence is KTSGKSNKSGTKPS. Over residues 179–194 the composition is skewed to acidic residues; sequence DEDDSGGEEEEEEEDH. The segment at 196-248 adopts a PHD-type zinc-finger fold; the sequence is NTLCGACGDNYGQDEFWICCDACETWFHGKCVKITPAKAEHIKHYKCPNCSSS.

It belongs to the Alfin family. Interacts with H3K4me3 and to a lesser extent with H3K4me2.

Its subcellular location is the nucleus. Its function is as follows. Histone-binding component that specifically recognizes H3 tails trimethylated on 'Lys-4' (H3K4me3), which mark transcription start sites of virtually all active genes. The chain is PHD finger protein ALFIN-LIKE 8 from Oryza sativa subsp. japonica (Rice).